Reading from the N-terminus, the 339-residue chain is Fructose-1,6-bisphosphatase isozyme 2 (339 aa).

The important for interaction with ALDOA stretch occupies residues 3 to 10; the sequence is DRSPFETD. Residues V18 and 28 to 32 contribute to the AMP site; that span reads TGELT. Positions 69 and 98 each coordinate Mg(2+). 113 to 114 lines the AMP pocket; sequence KY. The Mg(2+) site is built by D119, L121, and D122. A substrate-binding site is contributed by D122. R141 lines the AMP pocket. Positions 204 to 208 match the Nuclear localization signal motif; that stretch reads KKKGK. Residue 213-216 coordinates substrate; that stretch reads NEGY. A phosphotyrosine mark is found at Y216 and Y219. Residues 245–249, Y265, and K275 contribute to the substrate site; that span reads YVGSM. E281 is a Mg(2+) binding site.

Belongs to the FBPase class 1 family. In terms of assembly, homotetramer. Interacts with ALDOA; the interaction blocks inhibition by physiological concentrations of AMP and reduces inhibition by Ca(2+). Interacts with alpha-actinin and F-actin. It depends on Mg(2+) as a cofactor.

The protein resides in the cell junction. Its subcellular location is the cytoplasm. The protein localises to the nucleus. It localises to the myofibril. It is found in the sarcomere. The protein resides in the z line. The catalysed reaction is beta-D-fructose 1,6-bisphosphate + H2O = beta-D-fructose 6-phosphate + phosphate. It participates in carbohydrate biosynthesis; gluconeogenesis. With respect to regulation, subject to complex allosteric regulation. The enzyme can assume an active R-state, or an inactive T-state. Intermediate conformations may exist. AMP acts as an allosteric inhibitor. Fructose 2,6-bisphosphate acts as a competitive inhibitor. Strongly inhibited by Ca(2+). Functionally, catalyzes the hydrolysis of fructose 1,6-bisphosphate to fructose 6-phosphate in the presence of divalent cations and probably participates in glycogen synthesis from carbohydrate precursors, such as lactate. This Rattus norvegicus (Rat) protein is Fructose-1,6-bisphosphatase isozyme 2 (Fbp2).